A 453-amino-acid chain; its full sequence is ATP-dependent protease ATPase subunit HslU (453 aa).

ATP is bound by residues I18, 60-65 (GVGKTE), D266, E331, and R403.

It belongs to the ClpX chaperone family. HslU subfamily. In terms of assembly, a double ring-shaped homohexamer of HslV is capped on each side by a ring-shaped HslU homohexamer. The assembly of the HslU/HslV complex is dependent on binding of ATP.

Its subcellular location is the cytoplasm. In terms of biological role, ATPase subunit of a proteasome-like degradation complex; this subunit has chaperone activity. The binding of ATP and its subsequent hydrolysis by HslU are essential for unfolding of protein substrates subsequently hydrolyzed by HslV. HslU recognizes the N-terminal part of its protein substrates and unfolds these before they are guided to HslV for hydrolysis. This is ATP-dependent protease ATPase subunit HslU from Desulforapulum autotrophicum (strain ATCC 43914 / DSM 3382 / VKM B-1955 / HRM2) (Desulfobacterium autotrophicum).